The primary structure comprises 330 residues: DNA-directed RNA polymerase subunit alpha (330 aa).

Positions 1–236 (MQGSVTEFLK…EQLDAFVDLR (236 aa)) are alpha N-terminal domain (alpha-NTD). The segment at 250 to 330 (FDPILLRPVD…NWPPASIAED (81 aa)) is alpha C-terminal domain (alpha-CTD).

The protein belongs to the RNA polymerase alpha chain family. Homodimer. The RNAP catalytic core consists of 2 alpha, 1 beta, 1 beta' and 1 omega subunit. When a sigma factor is associated with the core the holoenzyme is formed, which can initiate transcription.

The enzyme catalyses RNA(n) + a ribonucleoside 5'-triphosphate = RNA(n+1) + diphosphate. In terms of biological role, DNA-dependent RNA polymerase catalyzes the transcription of DNA into RNA using the four ribonucleoside triphosphates as substrates. In Vibrio vulnificus (strain CMCP6), this protein is DNA-directed RNA polymerase subunit alpha.